A 219-amino-acid polypeptide reads, in one-letter code: tRNA (guanine-N(7)-)-methyltransferase (219 aa).

D47, E72, N99, and D125 together coordinate S-adenosyl-L-methionine. D125 is a catalytic residue. The substrate site is built by K129 and D161.

The protein belongs to the class I-like SAM-binding methyltransferase superfamily. TrmB family.

It catalyses the reaction guanosine(46) in tRNA + S-adenosyl-L-methionine = N(7)-methylguanosine(46) in tRNA + S-adenosyl-L-homocysteine. It participates in tRNA modification; N(7)-methylguanine-tRNA biosynthesis. Functionally, catalyzes the formation of N(7)-methylguanine at position 46 (m7G46) in tRNA. The chain is tRNA (guanine-N(7)-)-methyltransferase from Nostoc sp. (strain PCC 7120 / SAG 25.82 / UTEX 2576).